The sequence spans 300 residues: GTPase Era (300 aa).

The Era-type G domain maps to 7–182 (YCGFIAIVGR…LRKGVHHFPE (176 aa)). A G1 region spans residues 15–22 (GRPNVGKS). GTP is bound at residue 15-22 (GRPNVGKS). Residues 41 to 45 (QTTRH) form a G2 region. The interval 62–65 (DTPG) is G3. GTP contacts are provided by residues 62 to 66 (DTPGL) and 124 to 127 (NKVD). Positions 124–127 (NKVD) are G4. The G5 stretch occupies residues 154-156 (ISA). A KH type-2 domain is found at 206-283 (TGEELPYSVT…HLELWVKVKS (78 aa)).

The protein belongs to the TRAFAC class TrmE-Era-EngA-EngB-Septin-like GTPase superfamily. Era GTPase family. In terms of assembly, monomer.

It is found in the cytoplasm. It localises to the cell inner membrane. Its function is as follows. An essential GTPase that binds both GDP and GTP, with rapid nucleotide exchange. Plays a role in 16S rRNA processing and 30S ribosomal subunit biogenesis and possibly also in cell cycle regulation and energy metabolism. In Histophilus somni (strain 129Pt) (Haemophilus somnus), this protein is GTPase Era.